Here is a 79-residue protein sequence, read N- to C-terminus: MSNKGQLLQDPFLNALRKEHVPVSIYLVNGIKLQGNIESFDQYVVLLRNTVTQMVYKHAISTVVPARAVNFRVDDSSES.

The Sm domain maps to 10–69; the sequence is DPFLNALRKEHVPVSIYLVNGIKLQGNIESFDQYVVLLRNTVTQMVYKHAISTVVPARAV.

It belongs to the Hfq family. Homohexamer.

Its function is as follows. RNA chaperone that binds small regulatory RNA (sRNAs) and mRNAs to facilitate mRNA translational regulation in response to envelope stress, environmental stress and changes in metabolite concentrations. Also binds with high specificity to tRNAs. In Cupriavidus metallidurans (strain ATCC 43123 / DSM 2839 / NBRC 102507 / CH34) (Ralstonia metallidurans), this protein is RNA-binding protein Hfq.